A 708-amino-acid polypeptide reads, in one-letter code: Phosphate acetyltransferase (708 aa).

A phosphate acetyltransferase region spans residues 388–708 (EFCYNLKLLS…TIALTSIQSE (321 aa)).

This sequence in the N-terminal section; belongs to the CobB/CobQ family. The protein in the C-terminal section; belongs to the phosphate acetyltransferase and butyryltransferase family. As to quaternary structure, homohexamer.

It is found in the cytoplasm. It carries out the reaction acetyl-CoA + phosphate = acetyl phosphate + CoA. It functions in the pathway metabolic intermediate biosynthesis; acetyl-CoA biosynthesis; acetyl-CoA from acetate: step 2/2. Its function is as follows. Involved in acetate metabolism. The chain is Phosphate acetyltransferase (pta) from Buchnera aphidicola subsp. Acyrthosiphon pisum (strain APS) (Acyrthosiphon pisum symbiotic bacterium).